The following is a 288-amino-acid chain: Proline iminopeptidase (288 aa).

The AB hydrolase-1 domain occupies 27–274 (PVIVLHGGPG…SAHMPYIEEP (248 aa)). Residue serine 101 is the Nucleophile of the active site. Aspartate 240 is an active-site residue. Catalysis depends on histidine 267, which acts as the Proton donor.

This sequence belongs to the peptidase S33 family. Monomer.

It is found in the cytoplasm. It catalyses the reaction Release of N-terminal proline from a peptide.. Its activity is regulated as follows. Completely inhibited by p-chloromercuribenzoate (PCMB) and heavy metal salts. Partially inhibited by proline and proline derivatives with proline as the amino terminus. Enzyme inactivated by PCMB is reactivated by incubation with 2-mercaptoethanol. In terms of biological role, releases the N-terminal proline from various substrates including at least dipeptides Pro-Pro, Pro-Gln, Pro-Trp and Pro-Tyr. Also acts on amides (Pro-beta NA) and oligopeptides including Pro-Leu-GlyNH2, Pro-Leu-Gly, Pro-Phe-Gly-Lys, Pro-Pro-Ala-OBut and Pro-Pro-Gly-(Pro-Pro-Gly)(4). Higher activity toward small peptides (up to three residues), but very low activity for longer peptides. Has no activity against p-nitrophenyl acetate, poly_L-proline, Met-Pro or amino acyl amides other than Pro-betaNA (Pyr-betaNA, Phe-betaNA, Cys-betaNA, Met-betaNA, Leu-betaNA, Ala-betaNA and Z-Gly-Pro-betaNA). This Heyndrickxia coagulans (Weizmannia coagulans) protein is Proline iminopeptidase (pip).